The chain runs to 312 residues: Putative B3 domain-containing protein Os10g0537100 (312 aa).

A DNA-binding region (TF-B3) is located at residues 35–153 (FEKVVTPSDV…RLFIDFRRRR (119 aa)). Disordered regions lie at residues 161–182 (FPPTAAPPSHSHHHHQRHHPPL) and 286–312 (LLQLPSPSSSTSSSTAGKKMCSLDLGL). Over residues 170-180 (HSHHHHQRHHP) the composition is skewed to basic residues. Low complexity predominate over residues 286-301 (LLQLPSPSSSTSSSTA).

The protein localises to the nucleus. The chain is Putative B3 domain-containing protein Os10g0537100 from Oryza sativa subsp. japonica (Rice).